The following is an 839-amino-acid chain: ABC transporter A family member 7 (839 aa).

The next 7 helical transmembrane spans lie at 30 to 50, 238 to 258, 286 to 306, 321 to 341, 352 to 372, 378 to 398, and 419 to 439; these read GVQIAIPMALVIVLVILKLWI, IASLLGGSFFPFALSFVLPLF, IMTFIFNFLTYVVIVSVISLI, FALFLLLFLWGLSMVSFAFFL, SIFGYFFVMVMVNLNSTLSLF, VFYYWVPILAFSRGISTLCGL, and ILFWLFIDTIVYLTLAVYLDK. Positions 525–756 constitute an ABC transporter domain; the sequence is LIVQGLRKQF…FGDGYSVRID (232 aa). 559–566 is an ATP binding site; it reads GPNGAGKT.

It belongs to the ABC transporter superfamily. ABCA family.

It is found in the membrane. The sequence is that of ABC transporter A family member 7 (abcA7) from Dictyostelium discoideum (Social amoeba).